A 439-amino-acid chain; its full sequence is Serine/threonine-protein kinase 2 (439 aa).

The Protein kinase domain maps to 87–439; that stretch reads NDDFYHISTG…IFSDWINGGN (353 aa). Residues 93 to 101 and lysine 117 contribute to the ATP site; that span reads ISTGGYGIV. Aspartate 307 functions as the Proton acceptor in the catalytic mechanism.

This sequence belongs to the protein kinase superfamily. Ser/Thr protein kinase family. Phosphorylated in vivo. Autophosphorylated in vitro.

It localises to the host endoplasmic reticulum. The protein resides in the host endoplasmic reticulum-Golgi intermediate compartment. It catalyses the reaction L-seryl-[protein] + ATP = O-phospho-L-seryl-[protein] + ADP + H(+). The enzyme catalyses L-threonyl-[protein] + ATP = O-phospho-L-threonyl-[protein] + ADP + H(+). Essential serine-protein kinase involved in the early stage of virion morphogenesis. This is Serine/threonine-protein kinase 2 (OPG054) from Vaccinia virus (strain Tian Tan) (VACV).